We begin with the raw amino-acid sequence, 534 residues long: Cytochrome P450 monooxygenase AN1598 (534 aa).

Asparagine 3 is a glycosylation site (N-linked (GlcNAc...) asparagine). A helical membrane pass occupies residues 25 to 45 (LYLEILGVLSVVYLLQTLVAY). Residue asparagine 95 is glycosylated (N-linked (GlcNAc...) asparagine). Cysteine 464 provides a ligand contact to heme. A glycan (N-linked (GlcNAc...) asparagine) is linked at asparagine 498.

The protein belongs to the cytochrome P450 family. Heme is required as a cofactor.

The protein localises to the membrane. The protein operates within secondary metabolite biosynthesis; terpenoid biosynthesis. Functionally, bifunctional terpene synthase; part of the gene cluster that mediates the biosynthesis of the diterpene ent-pimara-8(14),15-diene (PD). Within the cluster, the HMG-CoA reductase AN1593 functions in the mevalonate pathway, which produces isoprenoid precursors. The geranylgeranyl pyrophosphate (GGPP) synthase AN1592 is needed in the formation of GGPP, the precursor for diterpenes. Lastly, the pimaradiene synthase pbcA performs the 2 cyclization steps that convert GGPP to ent-pimara-8(14),15-diene. The putative roles of the remaining cluster enzymes in ent-pimara-8(14),15-diene biosynthesis is unclear. The cytochrome P450 monooxygenase AN1598, the glutathione S-transferase AN1595, the oxidoreductases AN1596 and AN1597 probably function as decorative enzymes. It is possible that in biological conditions the compound is oxidized to ent-pimara-8(14),15-dien-19-oic acid, which is a bioactive diterpene compound predominant in many plant extracts. The chain is Cytochrome P450 monooxygenase AN1598 from Emericella nidulans (strain FGSC A4 / ATCC 38163 / CBS 112.46 / NRRL 194 / M139) (Aspergillus nidulans).